The primary structure comprises 1484 residues: Glutamate receptor ionotropic, NMDA 2B (1484 aa).

Positions 1–26 (MKPRAECCSPKFWLVLAVLAVSGSRA) are cleaved as a signal peptide. The Extracellular segment spans residues 27 to 555 (RSQKSPPSIG…SPSAFLEPFS (529 aa)). An N-linked (GlcNAc...) asparagine glycan is attached at N74. C86 and C321 form a disulfide bridge. The Zn(2+) site is built by H127 and E284. N-linked (GlcNAc...) asparagine glycosylation is found at N341, N348, N444, and N491. Disulfide bonds link C429/C456 and C436/C457. L-glutamate is bound by residues T514 and R519. N-linked (GlcNAc...) asparagine glycosylation occurs at N542. Residues 556-576 (ADVWVMMFVMLLIVSAVAVFV) traverse the membrane as a helical segment. Topologically, residues 577 to 601 (FEYFSPVGYNRCLADGREPGGPSFT) are cytoplasmic. The segment at residues 602–613 (IGKAIWLLWGLV) is an intramembrane region (discontinuously helical). The tract at residues 604 to 623 (KAIWLLWGLVFNNSVPVQNP) is pore-forming. The Cytoplasmic portion of the chain corresponds to 614–627 (FNNSVPVQNPKGTT). The helical transmembrane segment at 628 to 647 (SKIMVSVWAFFAVIFLASYT) threads the bilayer. Residues 648–819 (ANLAAFMIQE…SSQLDIDNMA (172 aa)) lie on the Extracellular side of the membrane. A glycan (N-linked (GlcNAc...) asparagine) is linked at N688. L-glutamate is bound by residues 690–691 (ST) and D732. A helical transmembrane segment spans residues 820–835 (GVFYMLGAAMALSLIT). At 836 to 1484 (FICEHLFYWQ…EKLSSIESDV (649 aa)) the chain is on the cytoplasmic side. Phosphoserine occurs at positions 882, 886, 917, and 920. Y962 and Y1039 each carry phosphotyrosine. Residues S1058, S1061, and S1064 each carry the phosphoserine modification. The tract at residues 1074 to 1097 (EGNAAKRRKQQYKDSLKKRPASAK) is disordered. A phosphotyrosine mark is found at Y1109 and Y1133. S1143 bears the Phosphoserine mark. Residue Y1155 is modified to Phosphotyrosine. The tract at residues 1161–1194 (DFKRDSVSGGGPCTNRSHIKHGTGDKHGVVSGVP) is disordered. Phosphoserine occurs at positions 1255 and 1259. The tract at residues 1271 to 1301 (AVTSNASTTKYPQSPTNSKAQKKNRNKLRRQ) is disordered. Over residues 1272-1289 (VTSNASTTKYPQSPTNSK) the composition is skewed to polar residues. Residues 1290–1301 (AQKKNRNKLRRQ) show a composition bias toward basic residues. Residues 1292–1304 (KKNRNKLRRQHSY) form an interaction with DAPK1 region. At S1303 the chain carries Phosphoserine; by DAPK1. Phosphotyrosine is present on Y1474. Positions 1482-1484 (SDV) match the PDZ-binding motif.

The protein belongs to the glutamate-gated ion channel (TC 1.A.10.1) family. NR2B/GRIN2B subfamily. As to quaternary structure, heterotetramer. Forms heterotetrameric channels composed of two GluN1/zeta subunits (GRIN1), and two identical GluN2/epsilon subunits (GRIN2A, GRIN2B, GRIN2C or GRIN2D) or GluN3 subunits (GRIN3A or GRIN3B) (in vitro). Can also form heterotetrameric channels that contain at least two GluN1 subunits and at least two different GluN2 subunits (or a combination of one GluN2 and one GluN3 subunits) (in vitro). In vivo, the subunit composition may depend on the expression levels of the different subunits. Found in a complex with GRIN1 and GRIN3B. Found in a complex with GRIN1, GRIN3A and PPP2CB. Interacts with PDZ domains of PATJ, DLG3 and DLG4. Interacts with HIP1 and NETO1. Interacts with MAGI3. Interacts with DAPK1. Found in a complex with GRIN1 and PRR7. Interacts with PRR7. Interacts with CAMK2A. Interacts with ARC; preventing ARC oligomerization. Interacts with TMEM25. Interacts (via the extreme C-terminus) with FRMPD2 (via the second PDZ domain); the interaction is direct and is likely to promote NMDAR-mediated neural signal transmission. Interacts with FAM81A; the interaction facilitates condensate formation via liquid-liquid phase separation. Phosphorylated on tyrosine residues. Phosphorylation at Ser-1303 by DAPK1 enhances synaptic NMDA receptor channel activity. As to expression, primarily found in the fronto-parieto-temporal cortex and hippocampus pyramidal cells, lower expression in the basal ganglia.

It is found in the cell membrane. The protein localises to the postsynaptic cell membrane. It localises to the cell projection. Its subcellular location is the dendrite. The protein resides in the late endosome. It is found in the lysosome. The protein localises to the cytoplasm. It localises to the cytoskeleton. It carries out the reaction Ca(2+)(in) = Ca(2+)(out). It catalyses the reaction Na(+)(in) = Na(+)(out). The enzyme catalyses K(+)(in) = K(+)(out). Its function is as follows. Component of N-methyl-D-aspartate (NMDA) receptors (NMDARs) that function as heterotetrameric, ligand-gated cation channels with high calcium permeability and voltage-dependent block by Mg(2+). Participates in synaptic plasticity for learning and memory formation by contributing to the long-term depression (LTD) of hippocampus membrane currents. Channel activation requires binding of the neurotransmitter L-glutamate to the GluN2 subunit, glycine or D-serine binding to the GluN1 subunit, plus membrane depolarization to eliminate channel inhibition by Mg(2+). NMDARs mediate simultaneously the potasium efflux and the influx of calcium and sodium. Each GluN2 subunit confers differential attributes to channel properties, including activation, deactivation and desensitization kinetics, pH sensitivity, Ca2(+) permeability, and binding to allosteric modulators. In concert with DAPK1 at extrasynaptic sites, acts as a central mediator for stroke damage. Its phosphorylation at Ser-1303 by DAPK1 enhances synaptic NMDA receptor channel activity inducing injurious Ca2+ influx through them, resulting in an irreversible neuronal death. The protein is Glutamate receptor ionotropic, NMDA 2B of Homo sapiens (Human).